The following is a 432-amino-acid chain: Asparagine--tRNA ligase 2 (432 aa).

This sequence belongs to the class-II aminoacyl-tRNA synthetase family. Homodimer.

Its subcellular location is the cytoplasm. The catalysed reaction is tRNA(Asn) + L-asparagine + ATP = L-asparaginyl-tRNA(Asn) + AMP + diphosphate + H(+). This is Asparagine--tRNA ligase 2 (asnS2) from Lactiplantibacillus plantarum (strain ATCC BAA-793 / NCIMB 8826 / WCFS1) (Lactobacillus plantarum).